Here is a 359-residue protein sequence, read N- to C-terminus: Cytoplasmic tRNA 2-thiolation protein 1 (359 aa).

The protein belongs to the TtcA family. CTU1/NCS6/ATPBD3 subfamily. In terms of assembly, interacts with NCS2 and URM1. May act by forming a heterodimer with NCS2. Component of a large molecular weight complex of more than 250 kDa.

It localises to the cytoplasm. Its subcellular location is the mitochondrion. Its pathway is tRNA modification; 5-methoxycarbonylmethyl-2-thiouridine-tRNA biosynthesis. Plays a central role in 2-thiolation of mcm(5)S(2)U at tRNA wobble positions of tRNA(Lys), tRNA(Glu) and tRNA(Gln). Directly binds tRNAs and probably acts by catalyzing adenylation of tRNAs, an intermediate required for 2-thiolation. It is unclear whether it acts as a sulfurtransferase that transfers sulfur from thiocarboxylated URM1 onto the uridine of tRNAs at wobble position. Prior mcm(5) tRNA modification by the elongator complex is required for 2-thiolation. May also be involved in protein urmylation. May also be involved in protein urmylation and in invasive and pseudohyphal growth. The polypeptide is Cytoplasmic tRNA 2-thiolation protein 1 (Saccharomyces cerevisiae (strain ATCC 204508 / S288c) (Baker's yeast)).